A 282-amino-acid chain; its full sequence is Acetyl-coenzyme A carboxylase carboxyl transferase subunit beta (282 aa).

Positions L29 to D282 constitute a CoA carboxyltransferase N-terminal domain. C33, C36, C51, and C54 together coordinate Zn(2+). The segment at C33–C54 adopts a C4-type zinc-finger fold.

The protein belongs to the AccD/PCCB family. In terms of assembly, acetyl-CoA carboxylase is a heterohexamer composed of biotin carboxyl carrier protein (AccB), biotin carboxylase (AccC) and two subunits each of ACCase subunit alpha (AccA) and ACCase subunit beta (AccD). Requires Zn(2+) as cofactor.

The protein resides in the cytoplasm. It carries out the reaction N(6)-carboxybiotinyl-L-lysyl-[protein] + acetyl-CoA = N(6)-biotinyl-L-lysyl-[protein] + malonyl-CoA. Its pathway is lipid metabolism; malonyl-CoA biosynthesis; malonyl-CoA from acetyl-CoA: step 1/1. Functionally, component of the acetyl coenzyme A carboxylase (ACC) complex. Biotin carboxylase (BC) catalyzes the carboxylation of biotin on its carrier protein (BCCP) and then the CO(2) group is transferred by the transcarboxylase to acetyl-CoA to form malonyl-CoA. This Limosilactobacillus fermentum (strain NBRC 3956 / LMG 18251) (Lactobacillus fermentum) protein is Acetyl-coenzyme A carboxylase carboxyl transferase subunit beta.